The sequence spans 119 residues: Phospholipase A2 A2-actitoxin-Cgg2a (119 aa).

Intrachain disulfides connect Cys-25–Cys-119, Cys-27–Cys-43, Cys-42–Cys-101, Cys-49–Cys-94, Cys-61–Cys-87, and Cys-78–Cys-92. Residues Gly-28 and Gly-30 each contribute to the Ca(2+) site. His-46 is a catalytic residue. Asp-47 is a binding site for Ca(2+). Asp-95 is an active-site residue.

It belongs to the phospholipase A2 family. In terms of assembly, homodimer. It depends on Ca(2+) as a cofactor.

It localises to the secreted. Its subcellular location is the nematocyst. It carries out the reaction a 1,2-diacyl-sn-glycero-3-phosphocholine + H2O = a 1-acyl-sn-glycero-3-phosphocholine + a fatty acid + H(+). Sea anemone phospholipase A2 (PLA2). When incubated with plasma, this protein shows a moderate anticoagulant activity (0.15 ug of enzyme/200 uL of plasma), inhibiting clotting induced by thrombin. This enzyme also induces myotoxicity, and edema. PLA2 catalyzes the calcium-dependent hydrolysis of the 2-acyl groups in 3-sn-phosphoglycerides. This is Phospholipase A2 A2-actitoxin-Cgg2a from Condylactis gigantea (Giant Caribbean anemone).